The following is an 815-amino-acid chain: (-)-kolavenyl diphosphate synthase TPS10, chloroplastic (815 aa).

A chloroplast-targeting transit peptide spans 1-50 (MFMSSSSSSHARRPQLSSFSYLHPPLPFPGLSFSSTRDKRVNFDSTRIIS). Lysine 247 is a binding site for substrate. Mg(2+) is bound by residues aspartate 379 and aspartate 381. The DXDD motif signature appears at 379-382 (DIDD). Lysine 465 contacts substrate.

This sequence belongs to the terpene synthase family. Tpsc subfamily. The cofactor is Mg(2+).

It localises to the plastid. The protein resides in the chloroplast. It catalyses the reaction (2E,6E,10E)-geranylgeranyl diphosphate = (-)-kolavenyl diphosphate. Inhibited by high concentrations of magnesium. Functionally, diterpene synthase that catalyzes the formation of (-)-kolavenyl diphosphate from geranylgeranyl diphosphate (GGPP). This is (-)-kolavenyl diphosphate synthase TPS10, chloroplastic from Tripterygium wilfordii (Thunder God vine).